The primary structure comprises 188 residues: UPF0398 protein OEOE_1093 (188 aa).

This sequence belongs to the UPF0398 family.

In Oenococcus oeni (strain ATCC BAA-331 / PSU-1), this protein is UPF0398 protein OEOE_1093.